Consider the following 154-residue polypeptide: Interleukin-2 (154 aa).

Residues 1–20 (MYKLQFLSCIALTLALVANS) form the signal peptide. Thr23 carries an O-linked (GalNAc...) threonine glycan. Cys78 and Cys126 form a disulfide bridge. A glycan (N-linked (GlcNAc...) asparagine) is linked at Asn111.

The protein belongs to the IL-2 family.

It localises to the secreted. Cytokine produced by activated CD4-positive helper T-cells and to a lesser extend activated CD8-positive T-cells and natural killer (NK) cells that plays pivotal roles in the immune response and tolerance. Binds to a receptor complex composed of either the high-affinity trimeric IL-2R (IL2RA/CD25, IL2RB/CD122 and IL2RG/CD132) or the low-affinity dimeric IL-2R (IL2RB and IL2RG). Interaction with the receptor leads to oligomerization and conformation changes in the IL-2R subunits resulting in downstream signaling starting with phosphorylation of JAK1 and JAK3. In turn, JAK1 and JAK3 phosphorylate the receptor to form a docking site leading to the phosphorylation of several substrates including STAT5. This process leads to activation of several pathways including STAT, phosphoinositide-3-kinase/PI3K and mitogen-activated protein kinase/MAPK pathways. Functions as a T-cell growth factor and can increase NK-cell cytolytic activity as well. Promotes strong proliferation of activated B-cells and subsequently immunoglobulin production. Plays a pivotal role in regulating the adaptive immune system by controlling the survival and proliferation of regulatory T-cells, which are required for the maintenance of immune tolerance. Moreover, participates in the differentiation and homeostasis of effector T-cell subsets, including Th1, Th2, Th17 as well as memory CD8-positive T-cells. The polypeptide is Interleukin-2 (IL2) (Camelus bactrianus (Bactrian camel)).